A 139-amino-acid chain; its full sequence is Large-conductance mechanosensitive channel (139 aa).

A run of 2 helical transmembrane segments spans residues 14 to 34 and 86 to 106; these read VVDM…VKSL and GLFI…FLLI.

This sequence belongs to the MscL family. In terms of assembly, homopentamer.

The protein resides in the cell inner membrane. Channel that opens in response to stretch forces in the membrane lipid bilayer. May participate in the regulation of osmotic pressure changes within the cell. The protein is Large-conductance mechanosensitive channel of Methylobacillus flagellatus (strain ATCC 51484 / DSM 6875 / VKM B-1610 / KT).